The following is a 765-amino-acid chain: Zinc metalloproteinase nas-37 (765 aa).

Residues 1 to 22 (MKSQACLKVCLALIGLVSIVST) form the signal peptide. Residues 23–114 (AYIANDVVSD…SESNSPRSRR (92 aa)) constitute a propeptide that is removed on maturation. The 194-residue stretch at 115–308 (QAHPDPRNFW…AKMINTRYCS (194 aa)) folds into the Peptidase M12A domain. A glycan (N-linked (GlcNAc...) asparagine) is linked at Asn126. 6 cysteine pairs are disulfide-bonded: Cys156–Cys307, Cys177–Cys196, Cys311–Cys331, Cys333–Cys342, Cys350–Cys374, and Cys400–Cys420. Position 204 (His204) interacts with Zn(2+). Residue Glu205 is part of the active site. Zn(2+) contacts are provided by His208 and His214. The EGF-like domain maps to 303–343 (NTRYCSNVCQRSLPCLNEGYTDPNNCGRCRCPSGYGGTYCE). The region spanning 350-458 (CGGSLTASSS…RGFTLKYRAI (109 aa)) is the CUB domain. A disordered region spans residues 513–573 (KYSSEELYDP…TRPTPTTTVA (61 aa)). Composition is skewed to low complexity over residues 526 to 545 (LSPS…DASP) and 562 to 573 (ALTRPTPTTTVA). One can recognise a TSP type-1 domain in the interval 576–627 (TASWSAWGEWSACSQPCGGCGTKTRVRACYGGNQVCPGSNLDRESCNAHACA). Intrachain disulfides connect Cys588/Cys621, Cys592/Cys626, and Cys604/Cys611.

Zn(2+) serves as cofactor. In terms of tissue distribution, expressed in hypodermal cells. Not expressed in the seam cells in L1 to L3 larvae, but it is present in seam cells of L4 larvae. Also expressed in attachment points of the cuticle at the anterior end of larvae, in the arcade cells in the mouth, the anterior pharynx, the amphid socket cells, and in the rectal epithelial cells at the posterior end of the larvae (at protein level).

The protein localises to the secreted. In terms of biological role, metalloprotease. Plays an essential role in molting, a process during larval stages in which a new cuticle is formed and the old cuticle is shed. Required during ecdysis, the opening of the cuticle to allow the worm to escape. This Caenorhabditis elegans protein is Zinc metalloproteinase nas-37 (nas-37).